The chain runs to 504 residues: Cytochrome P450 6B6 (504 aa).

Cysteine 445 is a binding site for heme.

It belongs to the cytochrome P450 family. Heme is required as a cofactor.

It localises to the endoplasmic reticulum membrane. It is found in the microsome membrane. It catalyses the reaction an organic molecule + reduced [NADPH--hemoprotein reductase] + O2 = an alcohol + oxidized [NADPH--hemoprotein reductase] + H2O + H(+). This Helicoverpa armigera (Cotton bollworm) protein is Cytochrome P450 6B6 (CYP6B6).